The primary structure comprises 343 residues: Glycerol-3-phosphate dehydrogenase [NAD(P)+] (343 aa).

The NADPH site is built by S22, Y23, H43, and K117. K117, G146, and T148 together coordinate sn-glycerol 3-phosphate. A150 serves as a coordination point for NADPH. Sn-glycerol 3-phosphate is bound by residues K202, D255, S265, R266, and N267. The active-site Proton acceptor is K202. R266 provides a ligand contact to NADPH. The NADPH site is built by V290 and E292.

Belongs to the NAD-dependent glycerol-3-phosphate dehydrogenase family.

It is found in the cytoplasm. It carries out the reaction sn-glycerol 3-phosphate + NAD(+) = dihydroxyacetone phosphate + NADH + H(+). It catalyses the reaction sn-glycerol 3-phosphate + NADP(+) = dihydroxyacetone phosphate + NADPH + H(+). Its pathway is membrane lipid metabolism; glycerophospholipid metabolism. Catalyzes the reduction of the glycolytic intermediate dihydroxyacetone phosphate (DHAP) to sn-glycerol 3-phosphate (G3P), the key precursor for phospholipid synthesis. This is Glycerol-3-phosphate dehydrogenase [NAD(P)+] from Aliivibrio fischeri (strain ATCC 700601 / ES114) (Vibrio fischeri).